The primary structure comprises 362 residues: C-C chemokine receptor type 10 (362 aa).

Over methionine 1 to alanine 52 the chain is Extracellular. The helical transmembrane segment at alanine 53–alanine 68 threads the bilayer. Residues alanine 69–serine 78 are Cytoplasmic-facing. Residues alanine 79–alanine 99 form a helical membrane-spanning segment. The Extracellular segment spans residues alanine 100–arginine 114. A disulfide bridge connects residues cysteine 113 and cysteine 191. The chain crosses the membrane as a helical span at residues threonine 115 to alanine 136. Topologically, residues aspartate 137–histidine 159 are cytoplasmic. The chain crosses the membrane as a helical span at residues leucine 160–phenylalanine 179. Over serine 180–valine 203 the chain is Extracellular. A helical transmembrane segment spans residues lysine 204 to alanine 225. Residues cysteine 226–arginine 247 are Cytoplasmic-facing. The chain crosses the membrane as a helical span at residues valine 248–leucine 269. The Extracellular portion of the chain corresponds to aspartate 270–valine 290. A helical membrane pass occupies residues alanine 291–leucine 313. Over glycine 314–asparagine 362 the chain is Cytoplasmic. Over residues glycine 328 to arginine 338 the composition is skewed to low complexity. Positions glycine 328 to asparagine 362 are disordered. Over residues alanine 351–asparagine 362 the composition is skewed to polar residues.

It belongs to the G-protein coupled receptor 1 family. Expressed at high levels in adult testis, small intestine, fetal lung, fetal kidney. Weaker expression was observed in many other adult tissues including spleen, thymus, lymph node, Peyer patches, colon, heart, ovary, peripheral blood lymphocytes, thyroid and spinal cord. Also expressed by melanocytes, dermal fibroblasts, dermal microvascular endothelial cells. Also detected in T-cells and in skin-derived Langerhans cells.

It localises to the cell membrane. In terms of biological role, receptor for chemokines SCYA27 and SCYA28. Subsequently transduces a signal by increasing the intracellular calcium ions level and stimulates chemotaxis in a pre-B cell line. This Homo sapiens (Human) protein is C-C chemokine receptor type 10 (CCR10).